A 197-amino-acid chain; its full sequence is A-type ATP synthase subunit E 2 (197 aa).

The protein belongs to the V-ATPase E subunit family. Has multiple subunits with at least A(3), B(3), C, D, E, F, H, I and proteolipid K(x).

It localises to the cell membrane. Its function is as follows. Component of the A-type ATP synthase that produces ATP from ADP in the presence of a proton gradient across the membrane. In Methanospirillum hungatei JF-1 (strain ATCC 27890 / DSM 864 / NBRC 100397 / JF-1), this protein is A-type ATP synthase subunit E 2.